A 503-amino-acid polypeptide reads, in one-letter code: Glycerol kinase (503 aa).

T14 is a binding site for ADP. ATP-binding residues include T14, T15, and S16. Residue T14 coordinates sn-glycerol 3-phosphate. ADP is bound at residue R18. The sn-glycerol 3-phosphate site is built by R84, E85, Y136, and D246. 5 residues coordinate glycerol: R84, E85, Y136, D246, and Q247. ADP-binding residues include T268 and G311. 4 residues coordinate ATP: T268, G311, Q315, and G412. G412 and N416 together coordinate ADP.

This sequence belongs to the FGGY kinase family.

The enzyme catalyses glycerol + ATP = sn-glycerol 3-phosphate + ADP + H(+). Its pathway is polyol metabolism; glycerol degradation via glycerol kinase pathway; sn-glycerol 3-phosphate from glycerol: step 1/1. Its activity is regulated as follows. Inhibited by fructose 1,6-bisphosphate (FBP). Key enzyme in the regulation of glycerol uptake and metabolism. Catalyzes the phosphorylation of glycerol to yield sn-glycerol 3-phosphate. In Haemophilus influenzae (strain PittGG), this protein is Glycerol kinase.